Consider the following 167-residue polypeptide: Ureidoglycolate lyase (167 aa).

The protein belongs to the ureidoglycolate lyase family. Homodimer. Requires Ni(2+) as cofactor.

It catalyses the reaction (S)-ureidoglycolate = urea + glyoxylate. The protein operates within nitrogen metabolism; (S)-allantoin degradation. In terms of biological role, catalyzes the catabolism of the allantoin degradation intermediate (S)-ureidoglycolate, generating urea and glyoxylate. Involved in the utilization of allantoin as nitrogen source. This chain is Ureidoglycolate lyase, found in Pseudomonas entomophila (strain L48).